The following is a 155-amino-acid chain: E3 ubiquitin-protein ligase LAP (155 aa).

The RING-CH-type zinc-finger motif lies at 1 to 55; that stretch reads MDPVCWICKDDYSIEKNYCNCKNEYKVVHDECMKKWIQYSRERSCKLCNKEYNII. The Cytoplasmic segment spans residues 1–74; it reads MDPVCWICKD…VFSIKDCKKS (74 aa). Zn(2+) contacts are provided by C5, C8, C19, C21, H29, C32, C45, and C48. Residues 75-95 traverse the membrane as a helical segment; it reads AILYATLFLCTFIISLVLTRI. Topologically, residues 96–115 are lumenal; the sequence is NITKIIDTSKNDVSFKLVTM. Residues 116-136 traverse the membrane as a helical segment; that stretch reads IFYLLPFVITCISFITLIVYL. Residues 137 to 155 lie on the Cytoplasmic side of the membrane; sequence YKYCKISAKNNTYDTIYEL.

It belongs to the poxviridae LAP protein family.

It is found in the host membrane. The protein localises to the host Golgi apparatus. The protein resides in the host trans-Golgi network membrane. Its subcellular location is the host early endosome membrane. It catalyses the reaction S-ubiquitinyl-[E2 ubiquitin-conjugating enzyme]-L-cysteine + [acceptor protein]-L-lysine = [E2 ubiquitin-conjugating enzyme]-L-cysteine + N(6)-ubiquitinyl-[acceptor protein]-L-lysine.. Functionally, E3 ubiquitin-protein ligase which promotes ubiquitination and subsequent degradation of host MHC-I and CD4 molecules, presumably to prevent lysis of infected cells by cytotoxic T-lymphocytes and NK cell. Binds target molecules through transmembrane interaction. The result of this ubiquitination is the enhancement of the endocytosis of the target chain and the delivery to the lysosome, where it is proteolytically destroyed. The chain is E3 ubiquitin-protein ligase LAP (LAP) from Swinepox virus (strain Kasza) (SWPV).